The primary structure comprises 308 residues: Very-long-chain enoyl-CoA reductase (308 aa).

Topologically, residues 1–86 are cytoplasmic; that stretch reads MKHYEVEILD…YFRDLGAQIS (86 aa). Position 22 is an N6-acetyllysine (K22). Phosphoserine is present on S58. K60 is modified (N6-acetyllysine). A helical membrane pass occupies residues 87 to 106; sequence WVTVFLTEYAGPLFIYLLFY. The Lumenal segment spans residues 107 to 124; the sequence is FRVPFIYGRKYDFTSSRH. A helical membrane pass occupies residues 125–147; sequence TVVHLACICHSFHYIKRLLETLF. Residues 148–158 lie on the Cytoplasmic side of the membrane; sequence VHRFSHGTMPL. The chain crosses the membrane as a helical span at residues 159-180; sequence RNIFKNCTYYWGFAAWMAYYIN. The Lumenal portion of the chain corresponds to 181-189; sequence HPLYTPPTY. A helical membrane pass occupies residues 190 to 216; it reads GAQQVKLALAIFVICQLGNFSIHMALR. The Cytoplasmic segment spans residues 217–245; it reads DLRPAGSKTRKIPYPTRNPFTWLFLLVSC. The helical transmembrane segment at 246-262 threads the bilayer; that stretch reads PNYTYEVGSWIGFAIMT. At 263–264 the chain is on the lumenal side; that stretch reads QC. Residues 265-292 traverse the membrane as a helical segment; sequence LPVALFSLVGFTQMTIWAKGKHRSYLKE. Residues 293–308 are Cytoplasmic-facing; sequence FRDYPPLRMPIIPFLL.

This sequence belongs to the steroid 5-alpha reductase family. Interacts with ELOVL1 and LASS2. In terms of processing, glycosylated.

It is found in the endoplasmic reticulum membrane. It carries out the reaction a very-long-chain 2,3-saturated fatty acyl-CoA + NADP(+) = a very-long-chain (2E)-enoyl-CoA + NADPH + H(+). It catalyses the reaction octadecanoyl-CoA + NADP(+) = (2E)-octadecenoyl-CoA + NADPH + H(+). The catalysed reaction is (2E,7Z,10Z,13Z,16Z)-docosapentaenoyl-CoA + NADPH + H(+) = (7Z,10Z,13Z,16Z)-docosatetraenoyl-CoA + NADP(+). The enzyme catalyses (2E,7Z,10Z,13Z,16Z,19Z)-docosahexaenoyl-CoA + NADPH + H(+) = (7Z,10Z,13Z,16Z,19Z)-docosapentaenoyl-CoA + NADP(+). It carries out the reaction (2E,8Z,11Z,14Z)-eicosatetraenoyl-CoA + NADPH + H(+) = (8Z,11Z,14Z)-eicosatrienoyl-CoA + NADP(+). It catalyses the reaction (2E)-hexadecenoyl-CoA + NADPH + H(+) = hexadecanoyl-CoA + NADP(+). The protein operates within lipid metabolism; fatty acid biosynthesis. It functions in the pathway lipid metabolism; sphingolipid metabolism. Its function is as follows. Involved in both the production of very long-chain fatty acids for sphingolipid synthesis and the degradation of the sphingosine moiety in sphingolipids through the sphingosine 1-phosphate metabolic pathway. Catalyzes the last of the four reactions of the long-chain fatty acids elongation cycle. This endoplasmic reticulum-bound enzymatic process, allows the addition of 2 carbons to the chain of long- and very long-chain fatty acids/VLCFAs per cycle. This enzyme reduces the trans-2,3-enoyl-CoA fatty acid intermediate to an acyl-CoA that can be further elongated by entering a new cycle of elongation. Thereby, it participates in the production of VLCFAs of different chain lengths that are involved in multiple biological processes as precursors of membrane lipids and lipid mediators. Catalyzes the saturation step of the sphingosine 1-phosphate metabolic pathway, the conversion of trans-2-hexadecenoyl-CoA to palmitoyl-CoA. In Bos taurus (Bovine), this protein is Very-long-chain enoyl-CoA reductase (TECR).